We begin with the raw amino-acid sequence, 341 residues long: Abnormal cell lineage protein 44 (341 aa).

A signal peptide spans 1–21 (MRALYFRTTTLSTFFILCSLA). 11 disulfide bridges follow: cysteine 84–cysteine 95, cysteine 134–cysteine 142, cysteine 144–cysteine 158, cysteine 206–cysteine 220, cysteine 208–cysteine 215, cysteine 265–cysteine 292, cysteine 275–cysteine 287, cysteine 291–cysteine 331, cysteine 307–cysteine 322, cysteine 309–cysteine 319, and cysteine 314–cysteine 315. Serine 212 carries O-palmitoleoyl serine; by mom-1 lipidation. The N-linked (GlcNAc...) asparagine glycan is linked to asparagine 279.

Belongs to the Wnt family. In terms of processing, palmitoleoylation is required for efficient binding to frizzled receptors. Depalmitoleoylation leads to Wnt signaling pathway inhibition.

The protein resides in the secreted. The protein localises to the extracellular space. It is found in the extracellular matrix. In terms of biological role, ligand for members of the frizzled family of seven transmembrane receptors. Affects male tail development, vulval precursor cell specification and egg laying. Involved in morphogenesis by influencing polarity of asymmetric cell divisions of the B, U, and F cells in the male, and the T cell in males and hermaphrodites. Controls spindle orientation in B-gamma cell division during male copulatory spicule development. Involved in specification of the P7.p lineage during vulval development. Has a role in providing polarity and default lin-17 localization in axon development and positioning of neuromuscular synapses in DA9 regions by negatively regulating synaptogenesis. The sequence is that of Abnormal cell lineage protein 44 from Caenorhabditis briggsae.